Here is a 226-residue protein sequence, read N- to C-terminus: Lipoprotein signal peptidase (226 aa).

The next 3 membrane-spanning stretches (helical) occupy residues 12–32 (KVVA…KIWV), 69–89 (FLSL…AKLV), and 103–123 (SLII…GVIF). Residues D150 and D184 contribute to the active site. The chain crosses the membrane as a helical span at residues 173-193 (FVFFHPVFNFADSCISIGLIL).

The protein belongs to the peptidase A8 family.

The protein resides in the cell inner membrane. It carries out the reaction Release of signal peptides from bacterial membrane prolipoproteins. Hydrolyzes -Xaa-Yaa-Zaa-|-(S,diacylglyceryl)Cys-, in which Xaa is hydrophobic (preferably Leu), and Yaa (Ala or Ser) and Zaa (Gly or Ala) have small, neutral side chains.. Its pathway is protein modification; lipoprotein biosynthesis (signal peptide cleavage). Its function is as follows. This protein specifically catalyzes the removal of signal peptides from prolipoproteins. This chain is Lipoprotein signal peptidase, found in Porphyromonas gingivalis (strain ATCC 33277 / DSM 20709 / CIP 103683 / JCM 12257 / NCTC 11834 / 2561).